We begin with the raw amino-acid sequence, 1019 residues long: Outer capsid protein P3 (1019 aa).

This sequence belongs to the phytoreovirus inner capsid protein P3 family. In terms of assembly, homodimer. Homomultimer.

Its subcellular location is the virion. The protein localises to the host cytoplasm. Capsid protein which self-assembles to form the inner icosahedral capsid with a T=2 symmetry, and consisting of 60 P3 dimers. This Alopecurus aequalis (Barnyard grass) protein is Outer capsid protein P3.